The sequence spans 553 residues: Zinc finger protein with KRAB and SCAN domains 3 (553 aa).

Positions 28–49 (EQEESSPLAEETSWLGSPGPDR) are disordered. Ser-33 and Ser-44 each carry phosphoserine. The region spanning 51-133 (RQRFRAFRYP…ALLEYLDRQL (83 aa)) is the SCAN box domain. Position 136 is a phosphothreonine (Thr-136). Lys-176 is covalently cross-linked (Glycyl lysine isopeptide (Lys-Gly) (interchain with G-Cter in SUMO2)). Thr-206 is subject to Phosphothreonine. Residues 213–273 (LKMEDVAPVL…RAEEYRDQKP (61 aa)) enclose the KRAB domain. Ser-223 is modified (phosphoserine). 5 C2H2-type zinc fingers span residues 313–335 (FYCR…KRIH), 341–363 (YECE…QRVH), 369–391 (YECE…QRTH), 397–419 (YECD…HRIH), and 425–447 (YQCN…QRTH). Thr-448 is subject to Phosphothreonine. C2H2-type zinc fingers lie at residues 479-501 (YQCN…QKVH) and 507-529 (FECQ…QRRH).

It belongs to the krueppel C2H2-type zinc-finger protein family. In terms of tissue distribution, expressed in heart, brain, spleen, lung, liver, skeletal muscle, kidney and testis.

It localises to the nucleus. It is found in the cytoplasm. Functionally, transcriptional factor that binds to the consensus sequence 5'-[GT][AG][AGT]GGGG-3' and acts as a repressor of autophagy. Specifically represses expression of genes involved in autophagy and lysosome biogenesis/function such as MAP1LC3B, ULK1 or WIPI2. Associates with chromatin at the ITGB4 and VEGF promoters. This is Zinc finger protein with KRAB and SCAN domains 3 (Zkscan3) from Mus musculus (Mouse).